Reading from the N-terminus, the 233-residue chain is Small ribosomal subunit protein uS3 (233 aa).

The KH type-2 domain maps to 39–107 (VRTFLTKELK…PAQINISEVR (69 aa)).

It belongs to the universal ribosomal protein uS3 family. In terms of assembly, part of the 30S ribosomal subunit. Forms a tight complex with proteins S10 and S14.

Its function is as follows. Binds the lower part of the 30S subunit head. Binds mRNA in the 70S ribosome, positioning it for translation. In Pseudoalteromonas translucida (strain TAC 125), this protein is Small ribosomal subunit protein uS3.